We begin with the raw amino-acid sequence, 218 residues long: Adenylate kinase (218 aa).

10 to 15 (GAGKGT) is an ATP binding site. The segment at 30–59 (STGDMLRAAVKAGTPLGQQAKAVMDAGKLV) is NMP. AMP is bound by residues T31, R36, 57–59 (KLV), 85–88 (GFPR), and Q92. Residues 122 to 159 (GRRSHPASGRTYHVKFNPPKVEGKDDVTGEDLIQREDD) form an LID region. ATP is bound by residues R123 and 132–133 (TY). Positions 127 to 147 (PASGRTYHVKFNPPKVEGKDD) are disordered. AMP contacts are provided by R156 and R167. G203 provides a ligand contact to ATP.

It belongs to the adenylate kinase family. Monomer.

The protein resides in the cytoplasm. It carries out the reaction AMP + ATP = 2 ADP. The protein operates within purine metabolism; AMP biosynthesis via salvage pathway; AMP from ADP: step 1/1. Catalyzes the reversible transfer of the terminal phosphate group between ATP and AMP. Plays an important role in cellular energy homeostasis and in adenine nucleotide metabolism. The polypeptide is Adenylate kinase (Paracidovorax citrulli (strain AAC00-1) (Acidovorax citrulli)).